The sequence spans 192 residues: GTP cyclohydrolase-2 (192 aa).

Position 47 to 51 (47 to 51 (RIHSE)) interacts with GTP. Residues Cys-52, Cys-63, and Cys-65 each contribute to the Zn(2+) site. GTP-binding positions include Gln-68, 90–92 (EGR), and Thr-112. The Proton acceptor role is filled by Asp-124. Arg-126 functions as the Nucleophile in the catalytic mechanism. GTP-binding residues include Thr-147 and Lys-152.

The protein belongs to the GTP cyclohydrolase II family. The cofactor is Zn(2+).

It carries out the reaction GTP + 4 H2O = 2,5-diamino-6-hydroxy-4-(5-phosphoribosylamino)-pyrimidine + formate + 2 phosphate + 3 H(+). Its pathway is cofactor biosynthesis; riboflavin biosynthesis; 5-amino-6-(D-ribitylamino)uracil from GTP: step 1/4. Catalyzes the conversion of GTP to 2,5-diamino-6-ribosylamino-4(3H)-pyrimidinone 5'-phosphate (DARP), formate and pyrophosphate. This is GTP cyclohydrolase-2 from Picrophilus torridus (strain ATCC 700027 / DSM 9790 / JCM 10055 / NBRC 100828 / KAW 2/3).